Reading from the N-terminus, the 459-residue chain is NADH-ubiquinone oxidoreductase chain 4 (459 aa).

The next 12 membrane-spanning stretches (helical) occupy residues 20–42 (PKWLWSATTTHSLIIASLSLTLF), 61–81 (MISTPLIILTCWLLPLMIIAS), 103–123 (LQALLIMAFSATEIILFYIMF), 148–168 (IYFLFYTLAGSLPLLVALLYL), 194–214 (FLWVACVTAFLVKMPLYGVHL), 224–244 (PVAGSMILAAILLKLGGYGMI), 257–277 (LAYPFIILALWGIIMTGSICM), 284–303 (SLIAYSSVSHMGLVASGILI), 307–329 (WGFTGAIILMIAHGLTSSALFCL), 350–370 (IILPLMATWWFIMSLANMALP), 392–414 (TILLTGTGTLITASYSLYLYMSS), and 435–455 (LLLTLHIIPIILLMIKPELIW).

This sequence belongs to the complex I subunit 4 family.

The protein resides in the mitochondrion membrane. It carries out the reaction a ubiquinone + NADH + 5 H(+)(in) = a ubiquinol + NAD(+) + 4 H(+)(out). In terms of biological role, core subunit of the mitochondrial membrane respiratory chain NADH dehydrogenase (Complex I) that is believed to belong to the minimal assembly required for catalysis. Complex I functions in the transfer of electrons from NADH to the respiratory chain. The immediate electron acceptor for the enzyme is believed to be ubiquinone. The sequence is that of NADH-ubiquinone oxidoreductase chain 4 (MT-ND4) from Polypterus ornatipinnis (Ornate bichir).